The following is a 481-amino-acid chain: Cytochrome P450 monooxygenase dpfgJ (481 aa).

A helical transmembrane segment spans residues 23–43; that stretch reads LVFTQAAVIGSILFVFLLGLY. Residue N338 is glycosylated (N-linked (GlcNAc...) asparagine). Residue C427 coordinates heme.

Belongs to the cytochrome P450 family. Requires heme as cofactor.

Its subcellular location is the membrane. The protein operates within secondary metabolite biosynthesis; terpenoid biosynthesis. Functionally, cytochrome P450 monooxygenase; part of the gene cluster that mediates the biosynthesis of diterpenoid pyrones. The first step of the pathway is the synthesis of the alpha-pyrone moiety by the polyketide synthase dpfgA via condensation of one acetyl-CoA starter unit with 3 malonyl-CoA units and 2 methylations. The alpha-pyrone is then combined with geranylgeranyl pyrophosphate (GGPP) formed by the GGPP synthase dpfgD through the action of the prenyltransferase dpfgC to yield a linear alpha-pyrone diterpenoid. Subsequent steps in the diterpenoid pyrone biosynthetic pathway involve the decalin core formation, which is initiated by the epoxidation of the C10-C11 olefin by the FAD-dependent oxidoreductase dpfgE, and is followed by a cyclization cascade catalyzed by the terpene cyclase dpfgB. The short chain dehydrogenase/reductase dpfgG then oxidizes the 8S hydroxy group to a ketone and the short chain dehydrogenase/reductase dpfgH reduces the ketone to the 8R hydroxy group to yield higginsianin B. Higginsianin B is further methylated by the methyltransferase dpfgI to produce the intermediate named FDDP B. The cytochrome P450 monooxygenase dfgpJ then catalyzes a three-step oxidation at C-27 to generate a carboxylic acid as well as C-26 hydroxylation. Finally, methyltransferase dpfgK methylates the carboxylic acid generated by dpfgJ, yielding the final diterpenoid pyrones from the pathway which were named FDDP D and FDDP E. The polypeptide is Cytochrome P450 monooxygenase dpfgJ (Gibberella zeae (strain ATCC MYA-4620 / CBS 123657 / FGSC 9075 / NRRL 31084 / PH-1) (Wheat head blight fungus)).